A 768-amino-acid polypeptide reads, in one-letter code: C-type polyheme cytochrome OmcC (768 aa).

The N-terminal stretch at 1–23 (MSRKVTKYSAVLAVSLFAAALAG) is a signal peptide. Cys-24 carries N-palmitoyl cysteine lipidation. A lipid anchor (S-diacylglycerol cysteine) is attached at Cys-24. The heme c site is built by Cys-48, Cys-51, His-52, Cys-80, Cys-83, His-84, Cys-112, Cys-115, His-116, Cys-148, Cys-151, His-152, Cys-193, Cys-196, His-197, Cys-238, Cys-241, His-242, Cys-320, Cys-323, His-324, Cys-405, Cys-408, His-409, Cys-454, Cys-457, His-458, Cys-504, Cys-507, His-508, Cys-579, Cys-582, His-583, Cys-611, Cys-614, and His-615.

Post-translationally, binds 12 heme c groups per subunit.

Its subcellular location is the cell outer membrane. Functionally, not involved in Fe(3+) reduction. The protein is C-type polyheme cytochrome OmcC (omcC) of Geobacter sulfurreducens (strain ATCC 51573 / DSM 12127 / PCA).